We begin with the raw amino-acid sequence, 977 residues long: Vacuolar membrane protease (977 aa).

Over 1-17 (MARSRTAGRCNPFAFYR) the chain is Cytoplasmic. A helical transmembrane segment spans residues 18 to 38 (VPVTVFVTLIYVALLAPIIVV). Topologically, residues 39–383 (HHILPAVPES…AFAVFEIHTL (345 aa)) are vacuolar. Asparagine 113 and asparagine 116 each carry an N-linked (GlcNAc...) asparagine glycan. 2 residues coordinate Zn(2+): histidine 166 and aspartate 178. Glutamate 212 (proton acceptor) is an active-site residue. Positions 213, 238, and 311 each coordinate Zn(2+). Residues 384–404 (FALSVTLLIVGPLTLFITSII) form a helical membrane-spanning segment. Topologically, residues 405-438 (LANQDRMYLFGISVPVDDGFGSVPLRGWRGFFRF) are cytoplasmic. A helical transmembrane segment spans residues 439 to 459 (PFIFGSTTASVVALAYLMAKI). Topologically, residues 460–469 (NPMIAHSSEY) are vacuolar. Residues 470 to 490 (AVWSMMISAWVFVAWFLSRIA) traverse the membrane as a helical segment. At 491–500 (NFARPSALHR) the chain is on the cytoplasmic side. Residues 501–521 (IYVLTWMFLLTWVLLVITTVY) form a helical membrane-spanning segment. At 522-525 (ENRD) the chain is on the vacuolar side. Residues 526–546 (GIASGYFVIFYAFGTFMATWI) form a helical membrane-spanning segment. Residues 547–659 (SYLELFSLPK…WSANLPKWTW (113 aa)) are Cytoplasmic-facing. Residues 566–576 (GQISSRPTSLG) show a composition bias toward polar residues. A disordered region spans residues 566-604 (GQISSRPTSLGGSRLLTPSGESVGQHPEDEEPTESTSLL). A helical transmembrane segment spans residues 660–680 (ILQFLLIAPIVIILIGQLGLL). The Vacuolar segment spans residues 681–696 (ITSAIHQTMQDGSSTL). The chain crosses the membrane as a helical span at residues 697 to 717 (VPYLIIALLTTFLFMPTLPFI). Over 718–726 (HRYTYHIPT) the chain is Cytoplasmic. The helical transmembrane segment at 727–747 (FLFLIFVATLVYNLVAFPFSG) threads the bilayer. Topologically, residues 748-977 (NNRTKLFFLQ…LVKGSRSFEV (230 aa)) are vacuolar. 2 N-linked (GlcNAc...) asparagine glycosylation sites follow: asparagine 749 and asparagine 791.

It belongs to the peptidase M28 family. Zn(2+) serves as cofactor.

The protein localises to the vacuole membrane. In terms of biological role, may be involved in vacuolar sorting and osmoregulation. In Talaromyces marneffei (strain ATCC 18224 / CBS 334.59 / QM 7333) (Penicillium marneffei), this protein is Vacuolar membrane protease.